The primary structure comprises 220 residues: Ribose-5-phosphate isomerase A (220 aa).

Residues 25–28, 80–83, and 93–96 contribute to the substrate site; these read TGST, DGAD, and KGGG. Glu-102 functions as the Proton acceptor in the catalytic mechanism. A substrate-binding site is contributed by Lys-120.

It belongs to the ribose 5-phosphate isomerase family. As to quaternary structure, homodimer.

It catalyses the reaction aldehydo-D-ribose 5-phosphate = D-ribulose 5-phosphate. The protein operates within carbohydrate degradation; pentose phosphate pathway; D-ribose 5-phosphate from D-ribulose 5-phosphate (non-oxidative stage): step 1/1. Its function is as follows. Catalyzes the reversible conversion of ribose-5-phosphate to ribulose 5-phosphate. The polypeptide is Ribose-5-phosphate isomerase A (Bacillus cereus (strain ATCC 10987 / NRS 248)).